The following is a 717-amino-acid chain: DNA-binding protein RFX2 (717 aa).

The segment at 1–28 (MQNSEGGADSPASVALRPAAQPMPASPQ) is disordered. The residue at position 26 (serine 26) is a Phosphoserine. The RFX-type winged-helix DNA-binding region spans 194-269 (HLQWLLDNYE…YHYYGIRLKP (76 aa)). Residues 286–318 (RQQPTHQKPRYRPAQKSDSLGDGSAHSNMHGMP) form a disordered region. Serine 411 is subject to Phosphoserine. Basic and acidic residues predominate over residues 685–710 (DGHSSEADVDGRSLGEPLVKRERSDP). Residues 685-717 (DGHSSEADVDGRSLGEPLVKRERSDPSHPLQGI) form a disordered region.

Belongs to the RFX family. Homodimer; probably only forms homodimers in testis. Heterodimer; heterodimerizes with RFX1 and RFX3.

The protein localises to the nucleus. It localises to the cytoplasm. Functionally, transcription factor that acts as a key regulator of spermatogenesis. Acts by regulating expression of genes required for the haploid phase during spermiogenesis, such as genes required for cilium assembly and function. Recognizes and binds the X-box, a regulatory motif with DNA sequence 5'-GTNRCC(0-3N)RGYAAC-3' present on promoters. Probably activates transcription of the testis-specific histone gene H1-6. This chain is DNA-binding protein RFX2 (Rfx2), found in Mus musculus (Mouse).